We begin with the raw amino-acid sequence, 82 residues long: UPF0729 protein C18orf32 homolog (82 aa).

The necessary for its localzation to the endoplasmic reticulum and lipid droplets stretch occupies residues 1 to 37 (MVCIPCIVIPVLLWVYKKFLEPIVYPFISPIINRIWP). Residues 46–82 (TSAKKEESNGTCKASGTSITNGSVSRGEEAVPDKKTD) form a disordered region. Residues 54 to 69 (NGTCKASGTSITNGSV) show a composition bias toward polar residues. Residues 71–82 (RGEEAVPDKKTD) show a composition bias toward basic and acidic residues.

Belongs to the UPF0729 family.

It is found in the endoplasmic reticulum. The protein resides in the lipid droplet. This chain is UPF0729 protein C18orf32 homolog, found in Xenopus tropicalis (Western clawed frog).